Consider the following 226-residue polypeptide: GTP-binding nuclear protein Ran-3 (226 aa).

The Small GTPase Ran-type domain occupies 14–178 (GYPSFKLILV…LYLARKLTGD (165 aa)). 25–32 (DGGTGKTT) lines the GTP pocket. Residues 44-52 (KRYEPTIGV) form a switch-I region. Residues Gly75, 129-132 (NKVD), and 157-159 (SAK) contribute to the GTP site. The switch-II stretch occupies residues 75–91 (GQEKFGGLRDGYYIHGH).

The protein belongs to the small GTPase superfamily. Ran family. Found in a nuclear export complex with RanGTP, exportin and pre-miRNA.

Its subcellular location is the nucleus. GTP-binding protein involved in nucleocytoplasmic transport. Required for the import of protein into the nucleus and also for RNA export. Involved in chromatin condensation and control of cell cycle. This Oryza sativa subsp. indica (Rice) protein is GTP-binding nuclear protein Ran-3 (RAN3).